Consider the following 401-residue polypeptide: Bifunctional sugar-1-phosphate nucleotidylyltransferase/acetyltransferase (401 aa).

A nucleotidylyltransferase region spans residues 1–220 (MKAFILAAGS…KPWNIIDVNK (220 aa)). Residues 8-13 (AGSGER), glutamine 73, and glycine 79 each bind a ribonucleoside 5'-triphosphate. Threonine 80, tyrosine 97, glycine 131, glutamate 146, and asparagine 157 together coordinate N-acetyl-alpha-D-glucosamine 1-phosphate. The segment at 236-401 (EDNVKIKGKV…DVGYGEFFKV (166 aa)) is acetyltransferase.

This sequence in the N-terminal section; belongs to the N-acetylglucosamine-1-phosphate uridyltransferase family. The protein in the C-terminal section; belongs to the transferase hexapeptide repeat family. Homotrimer. Requires Co(2+) as cofactor. It depends on Mn(2+) as a cofactor.

The enzyme catalyses dTTP + alpha-D-glucose 1-phosphate + H(+) = dTDP-alpha-D-glucose + diphosphate. It catalyses the reaction alpha-D-glucose 1-phosphate + UTP + H(+) = UDP-alpha-D-glucose + diphosphate. The catalysed reaction is N-acetyl-alpha-D-galactosamine 1-phosphate + UTP + H(+) = UDP-N-acetyl-alpha-D-galactosamine + diphosphate. It carries out the reaction N-acetyl-alpha-D-glucosamine 1-phosphate + UTP + H(+) = UDP-N-acetyl-alpha-D-glucosamine + diphosphate. The enzyme catalyses alpha-D-galactosamine 1-phosphate + acetyl-CoA = N-acetyl-alpha-D-galactosamine 1-phosphate + CoA + H(+). It catalyses the reaction alpha-D-glucosamine 1-phosphate + acetyl-CoA = N-acetyl-alpha-D-glucosamine 1-phosphate + CoA + H(+). Its pathway is nucleotide-sugar biosynthesis; UDP-N-acetyl-alpha-D-glucosamine biosynthesis; N-acetyl-alpha-D-glucosamine 1-phosphate from alpha-D-glucosamine 6-phosphate (route II): step 2/2. It functions in the pathway nucleotide-sugar biosynthesis; UDP-N-acetyl-alpha-D-glucosamine biosynthesis; UDP-N-acetyl-alpha-D-glucosamine from N-acetyl-alpha-D-glucosamine 1-phosphate: step 1/1. Its activity is regulated as follows. GlcN-1-P acetyltransferase activity is inhibited by divalent cations. GalN-1-P acetyltransferase activity is enhanced by Co(2+), Mg(2+) and Ca(2+), but inhibited by Zn(2+) or Mn(2+). Functionally, bifunctional enzyme involved in the synthesis of UDP-N-acetylglucosamine (UDP-GlcNAc) and UDP-N-acetylgalactosamine (UDP-GalNAc). It has multiple amino-sugar-1-phosphate acetyltransferase activities, including glucosamine-1-phosphate (GlcN-1-P) acetyltransferase and galactosamine-1-phosphate (GalN-1-P) acetyltransferase activities, and multiple sugar-1-phosphate nucleotidylyltransferase activities, including N-acetylglucosamine-1-phosphate (GlcNAc-1-P) uridyltransferase and N-acetylgalactosamine-1-phosphate (GalNAc-1-P) uridyltransferase activities. Also catalyzes the formation of dTDP-glucose from dTTP and glucose-1-phosphate (Glc-1-P), and the reverse reaction, which produces dTTP from dTDP-glucose and diphosphate. Can also catalyze the formation of UDP-glucose from UTP and glucose-1-phosphate. This chain is Bifunctional sugar-1-phosphate nucleotidylyltransferase/acetyltransferase, found in Sulfurisphaera tokodaii (strain DSM 16993 / JCM 10545 / NBRC 100140 / 7) (Sulfolobus tokodaii).